The primary structure comprises 229 residues: Flagellar brake protein YcgR (229 aa).

The region spanning 134–218 is the PilZ domain; sequence QLSLRVLDVS…GERALQRYID (85 aa).

This sequence belongs to the YcgR family. In terms of assembly, monomer. Interacts with the flagellar basal bodies.

It localises to the bacterial flagellum basal body. Functionally, acts as a flagellar brake, regulating swimming and swarming in a bis-(3'-5') cyclic diguanylic acid (c-di-GMP)-dependent manner. Binds 1 c-di-GMP dimer per subunit. Increasing levels of c-di-GMP lead to decreased motility. The sequence is that of Flagellar brake protein YcgR from Methylibium petroleiphilum (strain ATCC BAA-1232 / LMG 22953 / PM1).